A 156-amino-acid chain; its full sequence is Small ribosomal subunit protein uS7 (156 aa).

The protein belongs to the universal ribosomal protein uS7 family. Part of the 30S ribosomal subunit. Contacts proteins S9 and S11.

In terms of biological role, one of the primary rRNA binding proteins, it binds directly to 16S rRNA where it nucleates assembly of the head domain of the 30S subunit. Is located at the subunit interface close to the decoding center, probably blocks exit of the E-site tRNA. The polypeptide is Small ribosomal subunit protein uS7 (Methylorubrum populi (strain ATCC BAA-705 / NCIMB 13946 / BJ001) (Methylobacterium populi)).